Here is a 480-residue protein sequence, read N- to C-terminus: MAASAVCRAACSGTQALLRTCRSPALLRLPALRGTATFVQALQSVPETQVSVLDNGLRVASEQSSHPTCTVGVWIDVGSRYETEKNNGAGYFLEHLAFKGTKNRPGNALEKEVESIGAHLNAYSTREHTAYLIKALSKDLPKVVELLADIVQNISLEDSQIEKERDVILREMQENDASMQNVVFDYLHATAFQGTPLAQAVEGPSENVRRLSRTDLTDYLSRHYKAPRMVLAAAGGVKHQQLLDLAQDHFSSVSQVYEEDAVPSITPCRFTGSEIRHRDDALPLAHVAIAVEGPGWANPDNVALQVANAIIGHYDCTYGGGVHLSSPLASVAVANKLCQSFQTFNISYSETGLLGAHFVCDAMSIDDMIFFLQGQWMRLCTSATESEVTRGKNILRNALISHLDGTTPVCEDIGRSLLTYGRRIPLAEWESRIEEVDAQMVREVCSKYFYDQCPAVAGYGPIEQLSDYNRIRSGMFWLRF.

The transit peptide at 1 to 34 (MAASAVCRAACSGTQALLRTCRSPALLRLPALRG) directs the protein to the mitochondrion. Residues Lys111 and Lys138 each carry the N6-acetyllysine modification. The residue at position 163 (Lys163) is an N6-acetyllysine; alternate. An N6-succinyllysine; alternate modification is found at Lys163. Ser212 is modified (phosphoserine). At Thr214 the chain carries Phosphothreonine.

The protein belongs to the peptidase M16 family. UQCRC1/QCR1 subfamily. Component of the ubiquinol-cytochrome c oxidoreductase (cytochrome b-c1 complex, complex III, CIII), a multisubunit enzyme composed of 11 subunits. The complex is composed of 3 respiratory subunits cytochrome b, cytochrome c1 and Rieske protein UQCRFS1, 2 core protein subunits UQCRC1/QCR1 and UQCRC2/QCR2, and 6 low-molecular weight protein subunits UQCRH/QCR6, UQCRB/QCR7, UQCRQ/QCR8, UQCR10/QCR9, UQCR11/QCR10 and subunit 9, the cleavage product of Rieske protein UQCRFS1. The complex exists as an obligatory dimer and forms supercomplexes (SCs) in the inner mitochondrial membrane with NADH-ubiquinone oxidoreductase (complex I, CI) and cytochrome c oxidase (complex IV, CIV), resulting in different assemblies (supercomplex SCI(1)III(2)IV(1) and megacomplex MCI(2)III(2)IV(2)). Interacts with UQCC6. Interacts with STMP1.

It is found in the mitochondrion inner membrane. Functionally, component of the ubiquinol-cytochrome c oxidoreductase, a multisubunit transmembrane complex that is part of the mitochondrial electron transport chain which drives oxidative phosphorylation. The respiratory chain contains 3 multisubunit complexes succinate dehydrogenase (complex II, CII), ubiquinol-cytochrome c oxidoreductase (cytochrome b-c1 complex, complex III, CIII) and cytochrome c oxidase (complex IV, CIV), that cooperate to transfer electrons derived from NADH and succinate to molecular oxygen, creating an electrochemical gradient over the inner membrane that drives transmembrane transport and the ATP synthase. The cytochrome b-c1 complex catalyzes electron transfer from ubiquinol to cytochrome c, linking this redox reaction to translocation of protons across the mitochondrial inner membrane, with protons being carried across the membrane as hydrogens on the quinol. In the process called Q cycle, 2 protons are consumed from the matrix, 4 protons are released into the intermembrane space and 2 electrons are passed to cytochrome c. The 2 core subunits UQCRC1/QCR1 and UQCRC2/QCR2 are homologous to the 2 mitochondrial-processing peptidase (MPP) subunits beta-MPP and alpha-MPP respectively, and they seem to have preserved their MPP processing properties. May be involved in the in situ processing of UQCRFS1 into the mature Rieske protein and its mitochondrial targeting sequence (MTS)/subunit 9 when incorporated into complex III. Seems to play an important role in the maintenance of proper mitochondrial function in nigral dopaminergic neurons. In Rattus norvegicus (Rat), this protein is Cytochrome b-c1 complex subunit 1, mitochondrial (Uqcrc1).